A 586-amino-acid polypeptide reads, in one-letter code: Glutamate--tRNA ligase (586 aa).

The interval 84-111 (LTDIESEDTTDTYDLPSLPGVSDDEPTQ) is disordered. Acidic residues predominate over residues 85-94 (TDIESEDTTD). A 'HIGH' region motif is present at residues 119 to 129 (PNPNGPWHIGH).

This sequence belongs to the class-I aminoacyl-tRNA synthetase family. Glutamate--tRNA ligase type 2 subfamily.

The protein localises to the cytoplasm. The enzyme catalyses tRNA(Glu) + L-glutamate + ATP = L-glutamyl-tRNA(Glu) + AMP + diphosphate. Catalyzes the attachment of glutamate to tRNA(Glu) in a two-step reaction: glutamate is first activated by ATP to form Glu-AMP and then transferred to the acceptor end of tRNA(Glu). The protein is Glutamate--tRNA ligase of Haloquadratum walsbyi (strain DSM 16790 / HBSQ001).